The sequence spans 265 residues: uncharacterized protein (265 aa).

2 disordered regions span residues 21 to 53 (TLTH…LGPH) and 78 to 133 (HAPS…SSVS). Residues 90–101 (DDDDDDEDDDDS) show a composition bias toward acidic residues. Over residues 114-123 (SSSSSSSPRV) the composition is skewed to low complexity. 137–144 (AILHQGKS) contributes to the ATP binding site.

This is an uncharacterized protein from Saccharomyces cerevisiae (strain ATCC 204508 / S288c) (Baker's yeast).